The following is a 267-amino-acid chain: MTQIHPTALVDPKAELAADVTVGPFSIVGPNVRIGSGTSIGAHSTVEGHTTIGQGNNIGPYASVGGVPQDMKYRNEPTRLDIGDRNTIREFTTIHTGTVQDRGVTTIGSDNWIMAYVHIAHDCTVGNHTVFSSNAQIAGHVEVGDWAILGGMSGVHQFVRIGAHAMLGGASALVQDVPPFVIAASDKNGNKATPHGINVEGLRRRGFDAGQIAGLRQAYKLLYKSDLSFDEARNEIAALLAQADASAAEPLRAFLDFIAATQRGIVR.

The protein belongs to the transferase hexapeptide repeat family. LpxA subfamily. Homotrimer.

It is found in the cytoplasm. The catalysed reaction is a (3R)-hydroxyacyl-[ACP] + UDP-N-acetyl-alpha-D-glucosamine = a UDP-3-O-[(3R)-3-hydroxyacyl]-N-acetyl-alpha-D-glucosamine + holo-[ACP]. Its pathway is glycolipid biosynthesis; lipid IV(A) biosynthesis; lipid IV(A) from (3R)-3-hydroxytetradecanoyl-[acyl-carrier-protein] and UDP-N-acetyl-alpha-D-glucosamine: step 1/6. Involved in the biosynthesis of lipid A, a phosphorylated glycolipid that anchors the lipopolysaccharide to the outer membrane of the cell. In Cupriavidus pinatubonensis (strain JMP 134 / LMG 1197) (Cupriavidus necator (strain JMP 134)), this protein is Acyl-[acyl-carrier-protein]--UDP-N-acetylglucosamine O-acyltransferase.